The chain runs to 477 residues: Bifunctional protein HldE (477 aa).

Residues 1–318 (MKVTLPEFER…ENAVRGRAET (318 aa)) are ribokinase. K179 carries the N6-acetyllysine modification. Residue 195-198 (NLSE) participates in ATP binding. D264 is an active-site residue. The cytidylyltransferase stretch occupies residues 344-477 (MTNGVFDILH…IKKIQQDKKG (134 aa)).

The protein in the N-terminal section; belongs to the carbohydrate kinase PfkB family. This sequence in the C-terminal section; belongs to the cytidylyltransferase family. In terms of assembly, homodimer.

It carries out the reaction D-glycero-beta-D-manno-heptose 7-phosphate + ATP = D-glycero-beta-D-manno-heptose 1,7-bisphosphate + ADP + H(+). The catalysed reaction is D-glycero-beta-D-manno-heptose 1-phosphate + ATP + H(+) = ADP-D-glycero-beta-D-manno-heptose + diphosphate. The protein operates within nucleotide-sugar biosynthesis; ADP-L-glycero-beta-D-manno-heptose biosynthesis; ADP-L-glycero-beta-D-manno-heptose from D-glycero-beta-D-manno-heptose 7-phosphate: step 1/4. It functions in the pathway nucleotide-sugar biosynthesis; ADP-L-glycero-beta-D-manno-heptose biosynthesis; ADP-L-glycero-beta-D-manno-heptose from D-glycero-beta-D-manno-heptose 7-phosphate: step 3/4. In terms of biological role, catalyzes the phosphorylation of D-glycero-D-manno-heptose 7-phosphate at the C-1 position to selectively form D-glycero-beta-D-manno-heptose-1,7-bisphosphate. Its function is as follows. Catalyzes the ADP transfer from ATP to D-glycero-beta-D-manno-heptose 1-phosphate, yielding ADP-D-glycero-beta-D-manno-heptose. The chain is Bifunctional protein HldE from Shigella dysenteriae serotype 1 (strain Sd197).